The following is a 338-amino-acid chain: Heme-dependent oxidative N-demethylase alpha subunit (338 aa).

Residues tyrosine 38 and histidine 194 each coordinate heme b. The active-site Proton donor is arginine 224. Position 226 (asparagine 226) interacts with heme b. Residue glutamate 266 participates in dimethylamine binding. Positions 317 and 318 each coordinate heme b.

In terms of assembly, the heme-dependent oxidative N-demethylase (HODM) is a heterotetramer composed of a catalytic alpha subunit, a FMN/2Fe-2S-dependent oxidoreductase beta subunit, a gamma subunit with putative aminotransferase activity, and a delta subunit of unknown function.

The enzyme catalyses dimethylamine + NADPH + O2 + H(+) = methylamine + formaldehyde + NADP(+) + H2O. In terms of biological role, component of the heme-dependent oxidative N-demethylase (HODM) enzyme, that catalyzes the NADPH-dependent oxidation of dimethylamine (DMA) to methylamine (MA) and formaldehyde. Functions in bacterial methylated amine catabolism, linking alkylamine oxidation to the tetrahydrofolate C1 pool. The alpha subunit of HODM binds heme, oxygen and DMA, and serves as the site of the oxidative N-demethylase activity. The chain is Heme-dependent oxidative N-demethylase alpha subunit from Ectopseudomonas mendocina (strain ymp) (Pseudomonas mendocina).